The sequence spans 325 residues: Glutarate 2-hydroxylase (325 aa).

Fe cation-binding residues include His160, Asp162, and His292.

Belongs to the glutarate hydroxylase family. As to quaternary structure, homotetramer. The cofactor is Fe(2+).

The enzyme catalyses glutarate + 2-oxoglutarate + O2 = (S)-2-hydroxyglutarate + succinate + CO2. It participates in amino-acid degradation. In terms of biological role, acts as an alpha-ketoglutarate-dependent dioxygenase catalyzing hydroxylation of glutarate (GA) to L-2-hydroxyglutarate (L2HG). Functions in a L-lysine degradation pathway that proceeds via cadaverine, glutarate and L-2-hydroxyglutarate. The sequence is that of Glutarate 2-hydroxylase from Escherichia coli (strain 55989 / EAEC).